Reading from the N-terminus, the 747-residue chain is Ion-translocating oxidoreductase complex subunit C (747 aa).

2 consecutive 4Fe-4S ferredoxin-type domains span residues 368–397 (MEPV…QQLY) and 407–436 (KARN…VQYY). Residues Cys-377, Cys-380, Cys-383, Cys-387, Cys-416, Cys-419, Cys-422, and Cys-426 each coordinate [4Fe-4S] cluster. The interval 538-564 (VREERARENQTQQETPTVDVPSTELDD) is disordered.

The protein belongs to the 4Fe4S bacterial-type ferredoxin family. RnfC subfamily. As to quaternary structure, the complex is composed of six subunits: RnfA, RnfB, RnfC, RnfD, RnfE and RnfG. [4Fe-4S] cluster serves as cofactor.

It localises to the cell inner membrane. Functionally, part of a membrane-bound complex that couples electron transfer with translocation of ions across the membrane. This chain is Ion-translocating oxidoreductase complex subunit C, found in Pectobacterium carotovorum subsp. carotovorum (strain PC1).